A 451-amino-acid chain; its full sequence is Probable D-serine dehydratase (451 aa).

K119 carries the post-translational modification N6-(pyridoxal phosphate)lysine.

This sequence belongs to the serine/threonine dehydratase family. DsdA subfamily. Requires pyridoxal 5'-phosphate as cofactor.

It catalyses the reaction D-serine = pyruvate + NH4(+). The chain is Probable D-serine dehydratase from Acidovorax ebreus (strain TPSY) (Diaphorobacter sp. (strain TPSY)).